The sequence spans 501 residues: Lysine--tRNA ligase (501 aa).

Residues E411 and E418 each coordinate Mg(2+).

This sequence belongs to the class-II aminoacyl-tRNA synthetase family. As to quaternary structure, homodimer. The cofactor is Mg(2+).

It is found in the cytoplasm. The enzyme catalyses tRNA(Lys) + L-lysine + ATP = L-lysyl-tRNA(Lys) + AMP + diphosphate. This chain is Lysine--tRNA ligase, found in Thiobacillus denitrificans (strain ATCC 25259 / T1).